Consider the following 616-residue polypeptide: Endonuclease 8-like 3 (616 aa).

The FPG-type zinc finger occupies 271-305 (KVYKRPNCGQCGTKITVCRLGEHNRMTYFCPKCQK). The segment at 341-370 (KEEHWACAVCTLINKPSDKQCDACLTLRPE) adopts a RanBP2-type zinc-finger fold. Residues 491-524 (LKTGHTTSNTIHLSSTISSPQSKMTGDAAAKTGN) form a disordered region. Polar residues predominate over residues 494–514 (GHTTSNTIHLSSTISSPQSKM). 8 residues coordinate Zn(2+): cysteine 527, histidine 530, cysteine 553, cysteine 561, cysteine 574, histidine 576, cysteine 599, and cysteine 607. 2 GRF-type zinc fingers span residues 527–570 (CSAH…ADLH) and 574–616 (CNHG…AKTE).

It belongs to the FPG family.

It is found in the nucleus. The protein localises to the chromosome. It carries out the reaction 2'-deoxyribonucleotide-(2'-deoxyribose 5'-phosphate)-2'-deoxyribonucleotide-DNA = a 3'-end 2'-deoxyribonucleotide-(2,3-dehydro-2,3-deoxyribose 5'-phosphate)-DNA + a 5'-end 5'-phospho-2'-deoxyribonucleoside-DNA + H(+). DNA glycosylase which prefers single-stranded DNA (ssDNA), or partially ssDNA structures such as bubble and fork structures, to double-stranded DNA (dsDNA). Mediates interstrand cross-link repair in response to replication stress: recruited to replication stress sites via interaction with ubiquitinated CMG helicase and acts by mediating DNA glycosylase activity. Cleaves one of the two N-glycosyl bonds comprising the interstrand cross-link, which avoids the formation of a double-strand break but generates an abasic site that is bypassed by translesion synthesis polymerases. The chain is Endonuclease 8-like 3 from Xenopus laevis (African clawed frog).